We begin with the raw amino-acid sequence, 485 residues long: 2-succinylbenzoate--CoA ligase (485 aa).

Belongs to the ATP-dependent AMP-binding enzyme family. MenE subfamily.

It catalyses the reaction 2-succinylbenzoate + ATP + CoA = 2-succinylbenzoyl-CoA + AMP + diphosphate. Its pathway is quinol/quinone metabolism; 1,4-dihydroxy-2-naphthoate biosynthesis; 1,4-dihydroxy-2-naphthoate from chorismate: step 5/7. It functions in the pathway quinol/quinone metabolism; menaquinone biosynthesis. In terms of biological role, converts 2-succinylbenzoate (OSB) to 2-succinylbenzoyl-CoA (OSB-CoA). The chain is 2-succinylbenzoate--CoA ligase from Enterococcus faecalis (strain ATCC 700802 / V583).